Consider the following 308-residue polypeptide: Ribonuclease HIII (308 aa).

The 218-residue stretch at 91 to 308 folds into the RNase H type-2 domain; sequence KNVIGSDEVG…TEKALKMVKK (218 aa). Positions 97, 98, and 202 each coordinate a divalent metal cation.

The protein belongs to the RNase HII family. RnhC subfamily. It depends on Mn(2+) as a cofactor. Mg(2+) serves as cofactor.

It is found in the cytoplasm. It carries out the reaction Endonucleolytic cleavage to 5'-phosphomonoester.. Its function is as follows. Endonuclease that specifically degrades the RNA of RNA-DNA hybrids. The chain is Ribonuclease HIII from Listeria monocytogenes serovar 1/2a (strain ATCC BAA-679 / EGD-e).